Consider the following 172-residue polypeptide: Podoplanin (172 aa).

An N-terminal signal peptide occupies residues 1–22; the sequence is MWTVPVLFWVLGSVWFWDSAQG. The Extracellular segment spans residues 23–141; that stretch reads GTIGVNEDDI…KKDGLPVVTL (119 aa). 5 O-linked (GalNAc...) threonine glycosylation sites follow: T37, T51, T52, T53, and T56. Positions 49–132 are disordered; the sequence is KITTTGATGG…AGDETQTTDK (84 aa). Polar residues predominate over residues 51–63; it reads TTTGATGGLNEST. Residue N60 is glycosylated (N-linked (GlcNAc...) asparagine). O-linked (GalNAc...) threonine glycosylation is found at T63, T71, and T77. Positions 72–81 are enriched in basic and acidic residues; that stretch reads QRERGTKPPL. The O-linked (GalNAc...) serine glycan is linked to S85. O-linked (GalNAc...) threonine glycosylation is present at T86. An O-linked (GalNAc...) serine glycan is attached at S87. A glycan (O-linked (GalNAc...) threonine) is linked at T89. O-linked (GalNAc...) serine glycosylation occurs at S90. A compositionally biased stretch (basic and acidic residues) spans 90 to 99; it reads SDHDHREHES. Residues T100, T101, T102, T107, and T115 are each glycosylated (O-linked (GalNAc...) threonine). Positions 100–109 are enriched in low complexity; sequence TTTVKVVTSH. The span at 110 to 132 shows a compositional bias: basic and acidic residues; that stretch reads SVDKKTSHPNRDNAGDETQTTDK. A helical transmembrane segment spans residues 142–162; it reads VGIIVGVLLAIGFVGGIFIVV. Residues 143 to 147 are requires for dimerization and lipidd rafts association; the sequence is GIIVG. Over 163–172 the chain is Cytoplasmic; it reads MKKISGRFSP. Positions 164-165 are requires for interaction with MSN and EZR; that stretch reads KK.

It belongs to the podoplanin family. As to quaternary structure, homodimer. Interacts with CLEC1B; the interaction is independent of CLEC1B glycosylation and activates CLEC1B; the interaction is dependent of sialic acid on O-glycans. Interacts with CD9; this interaction is homophilic and attenuates platelet aggregation and pulmonary metastasis induced by PDPN. Interacts with LGALS8; the interaction is glycosylation-dependent; may participate in connection of the lymphatic endothelium to the surrounding extracellular matrix. Interacts with HSPA9. Interacts (via extracellular domain) with CD44; this interaction is required for PDPN-mediated directional migration and regulation of lamellipodia extension/stabilization during cell spreading and migration. Interacts (via cytoplasmic domain) with MSN and EZR; activates RHOA and promotes epithelial-mesenchymal transition. Interacts with CCL21; relocalized PDPN to the basolateral membrane. Post-translationally, extensively O-glycosylated. Contains sialic acid residues. O-glycosylation is necessary for platelet aggregation activity. Disialylated at Thr-52; sialic acid is critical for platelet-aggregating activity and for CLEC1B interaction. In terms of processing, phosphorylated by PKA; decreases cell migration. The N-terminus is blocked. Detected at high levels in lung and brain, at lower levels in kidney, stomach, liver, spleen and esophagus, and not detected in skin and small intestine. Expressed in epithelial cells of choroid plexus, ependyma, glomerulus and alveolus, in mesothelial cells and in endothelia of lymphatic vessels. Also expressed in stromal cells of peripheral lymphoid tissue and thymic epithelial cells. Detected in carcinoma cell lines and cultured fibroblasts. Expressed at higher levels in colon carcinomas than in normal colon tissue.

The protein resides in the membrane. Its subcellular location is the cell projection. It localises to the lamellipodium membrane. The protein localises to the filopodium membrane. It is found in the microvillus membrane. The protein resides in the ruffle membrane. Its subcellular location is the membrane raft. It localises to the apical cell membrane. The protein localises to the basolateral cell membrane. It is found in the invadopodium. In terms of biological role, mediates effects on cell migration and adhesion through its different partners. During development plays a role in blood and lymphatic vessels separation by binding CLEC1B, triggering CLEC1B activation in platelets and leading to platelet activation and/or aggregation. Interaction with CD9, on the contrary, attenuates platelet aggregation and pulmonary metastasis induced by PDPN. Mediates effects on cell migration and adhesion through its different partners. Through MSN or EZR interaction promotes epithelial-mesenchymal transition (EMT) leading to ERZ phosphorylation and triggering RHOA activation leading to cell migration increase and invasiveness. Interaction with CD44 promotes directional cell migration in epithelial and tumor cells. In lymph nodes (LNs), controls fibroblastic reticular cells (FRCs) adhesion to the extracellular matrix (ECM) and contraction of the actomyosin by maintaining ERM proteins (EZR; MSN and RDX) and MYL9 activation through association with unknown transmembrane proteins. Engagement of CLEC1B by PDPN promotes FRCs relaxation by blocking lateral membrane interactions leading to reduction of ERM proteins (EZR; MSN and RDX) and MYL9 activation. Through binding with LGALS8 may participate in connection of the lymphatic endothelium to the surrounding extracellular matrix. In keratinocytes, induces changes in cell morphology showing an elongated shape, numerous membrane protrusions, major reorganization of the actin cytoskeleton, increased motility and decreased cell adhesion. Controls invadopodia stability and maturation leading to efficient degradation of the extracellular matrix (ECM) in tumor cells through modulation of RHOC activity in order to activate ROCK1/ROCK2 and LIMK1/LIMK2 and inactivation of CFL1. Required for normal lung cell proliferation and alveolus formation at birth. Does not function as a water channel or as a regulator of aquaporin-type water channels. Does not have any effect on folic acid or amino acid transport. The polypeptide is Podoplanin (Mus musculus (Mouse)).